The sequence spans 382 residues: 4-hydroxy-3-methylbut-2-en-1-yl diphosphate synthase (flavodoxin) (382 aa).

[4Fe-4S] cluster is bound by residues cysteine 273, cysteine 276, cysteine 308, and glutamate 315.

This sequence belongs to the IspG family. Requires [4Fe-4S] cluster as cofactor.

The enzyme catalyses (2E)-4-hydroxy-3-methylbut-2-enyl diphosphate + oxidized [flavodoxin] + H2O + 2 H(+) = 2-C-methyl-D-erythritol 2,4-cyclic diphosphate + reduced [flavodoxin]. It functions in the pathway isoprenoid biosynthesis; isopentenyl diphosphate biosynthesis via DXP pathway; isopentenyl diphosphate from 1-deoxy-D-xylulose 5-phosphate: step 5/6. In terms of biological role, converts 2C-methyl-D-erythritol 2,4-cyclodiphosphate (ME-2,4cPP) into 1-hydroxy-2-methyl-2-(E)-butenyl 4-diphosphate. The chain is 4-hydroxy-3-methylbut-2-en-1-yl diphosphate synthase (flavodoxin) from Gluconacetobacter diazotrophicus (strain ATCC 49037 / DSM 5601 / CCUG 37298 / CIP 103539 / LMG 7603 / PAl5).